A 78-amino-acid chain; its full sequence is Large ribosomal subunit protein bL28 (78 aa).

Residues 1-25 are disordered; the sequence is MSRVCQVTGKRPAVGNNRSHAKNAT.

It belongs to the bacterial ribosomal protein bL28 family.

The chain is Large ribosomal subunit protein bL28 from Aliivibrio salmonicida (strain LFI1238) (Vibrio salmonicida (strain LFI1238)).